A 70-amino-acid chain; its full sequence is NAD(P)H-quinone oxidoreductase subunit L (70 aa).

A run of 2 helical transmembrane segments spans residues 2 to 22 and 39 to 59; these read IVPL…PVAL and TFMY…SPFV.

It belongs to the complex I NdhL subunit family. In terms of assembly, NDH-1 can be composed of about 15 different subunits; different subcomplexes with different compositions have been identified which probably have different functions.

It is found in the cellular thylakoid membrane. The catalysed reaction is a plastoquinone + NADH + (n+1) H(+)(in) = a plastoquinol + NAD(+) + n H(+)(out). It catalyses the reaction a plastoquinone + NADPH + (n+1) H(+)(in) = a plastoquinol + NADP(+) + n H(+)(out). NDH-1 shuttles electrons from an unknown electron donor, via FMN and iron-sulfur (Fe-S) centers, to quinones in the respiratory and/or the photosynthetic chain. The immediate electron acceptor for the enzyme in this species is believed to be plastoquinone. Couples the redox reaction to proton translocation, and thus conserves the redox energy in a proton gradient. Cyanobacterial NDH-1 also plays a role in inorganic carbon-concentration. This Trichormus variabilis (strain ATCC 29413 / PCC 7937) (Anabaena variabilis) protein is NAD(P)H-quinone oxidoreductase subunit L.